Consider the following 206-residue polypeptide: Ribosomal RNA large subunit methyltransferase E (206 aa).

5 residues coordinate S-adenosyl-L-methionine: Gly-60, Trp-62, Asp-80, Asp-96, and Asp-121. Lys-161 acts as the Proton acceptor in catalysis.

It belongs to the class I-like SAM-binding methyltransferase superfamily. RNA methyltransferase RlmE family.

The protein localises to the cytoplasm. It carries out the reaction uridine(2552) in 23S rRNA + S-adenosyl-L-methionine = 2'-O-methyluridine(2552) in 23S rRNA + S-adenosyl-L-homocysteine + H(+). In terms of biological role, specifically methylates the uridine in position 2552 of 23S rRNA at the 2'-O position of the ribose in the fully assembled 50S ribosomal subunit. The chain is Ribosomal RNA large subunit methyltransferase E from Hydrogenovibrio crunogenus (strain DSM 25203 / XCL-2) (Thiomicrospira crunogena).